Here is a 348-residue protein sequence, read N- to C-terminus: Phosphate acyltransferase (348 aa).

This sequence belongs to the PlsX family. As to quaternary structure, homodimer. Probably interacts with PlsY.

Its subcellular location is the cytoplasm. The enzyme catalyses a fatty acyl-[ACP] + phosphate = an acyl phosphate + holo-[ACP]. The protein operates within lipid metabolism; phospholipid metabolism. Its function is as follows. Catalyzes the reversible formation of acyl-phosphate (acyl-PO(4)) from acyl-[acyl-carrier-protein] (acyl-ACP). This enzyme utilizes acyl-ACP as fatty acyl donor, but not acyl-CoA. This is Phosphate acyltransferase from Rhizorhabdus wittichii (strain DSM 6014 / CCUG 31198 / JCM 15750 / NBRC 105917 / EY 4224 / RW1) (Sphingomonas wittichii).